The chain runs to 252 residues: Large ribosomal subunit protein uL4 (252 aa).

Belongs to the universal ribosomal protein uL4 family. In terms of assembly, part of the 50S ribosomal subunit.

Its function is as follows. One of the primary rRNA binding proteins, this protein initially binds near the 5'-end of the 23S rRNA. It is important during the early stages of 50S assembly. It makes multiple contacts with different domains of the 23S rRNA in the assembled 50S subunit and ribosome. In terms of biological role, forms part of the polypeptide exit tunnel. This is Large ribosomal subunit protein uL4 from Methanococcus vannielii (strain ATCC 35089 / DSM 1224 / JCM 13029 / OCM 148 / SB).